The sequence spans 1390 residues: MKTPAVLAPGILVLLFTLVQRSNGECKEALAKSKMNVNMKYQLPNFTAETPIQNVILHEHHIFLGATNYIYVLNEEDLQKVAEYKTGPVLEHPDCFPCQDCSSKANLSGGVWKDNINMALVVDTYYDDQLISCGSINRGTCQRHVFPHNHTADIQSEVHCIFSPQIEEPSQCPDCVVSALGAKVLSSVKDRFINFFVGNTINSSYFPDHPLHSISVRRLKETKDGFMFLTDQSYIDVLPEFRDSYPIKYVHAFESNNFIYFLTVQRETLDAQTFHTRIIRFCSINSGLHSYMEMPLECILTEKRKKRSTKKEVFNILQAAYVSKPGAQLARQIGASLNDDILFGVFAQSKPDSAEPMDRSAMCAFPIKYVNDFFNKIVNKNNVRCLQHFYGPNHEHCFNRTLLRNSSGCEARRDEYRTEFTTALQRVDLFMGQFSEVLLTSVSTFIKGDLTIANLGTSEGRFMQVVVSRSGPSTPHVNFLLDSHPVSPEVIVEHPLNQNGYTLVVTGKKITKIPLSGLGCRHFQSCSQCLSAPPFVQCGWCHDKCVRSEECPSGTWTQQICLPAIYKVFPNSAPLEGGTRLTICGWDFGFRRNNKFDLKKTRVLLGNESCTLTLSESTMNTLKCTVGPAMNKHFNMSITISNGHGTTQYSTFSYVDPVITSISPKYGPMAGGTLLTLTGNYLNSGNSRHISIGGKTCTLKSVSNSILECYTPAQTISTEFAVKLKIDLANRETNIFSYREDPIVYEIHPTKSFISGGSTITGVGKNLNSVSVPRMVINVHEAGRNFTVACQHRSNSEIICCTTPSLQQLNLQLPLKTKAFFMLDGILSKYFDLIYVHNPVFKPFEKPVMISMGNENVLEIKGNDIDPEAVKGEVLKVGNKSCENIHLHSEAVLCTVPNDLLKLNSELNIEWKQAISSTVLGKVIVQPDQNFTGLIAGVVSISVALLLLLGFFLWLKKRKQIKDLGSELVRYDARVHTPHLDRLVSARSVSPTTEMVSNESVDYRATFPEDQFPNSSQNGSCRQVQYPLTDMSPILTSGDSDISSPLLQNTVHIDLSALNPELVQAVQHVVIGPSSLIVHFNEVIGRGHFGCVYHGTLLDNDGKKIHCAVKSLNRITDIGEVSQFLTEGIIMKDFSHPNVLSLLGICLRSEGSPLVVLPYMKHGDLRNFIRNETHNPTVKDLIGFGLQVAKGMKYLASKKFVHRDLAARNCMLDEKFTVKVADFGLARDMYDKEYYSVHNKTGAKLPVKWMALESLQTQKFTTKSDVWSFGVLLWELMTRGAPPYPDVNTFDITVYLLQGRRLLQPEYCPDPLYEVMLKCWHPKAEMRPSFSELVSRISAIFSTFIGEHYVHVNATYVNVKCVAPYPSLLSSEDNADNEVDTRPASFWETS.

The N-terminal stretch at 1 to 24 (MKTPAVLAPGILVLLFTLVQRSNG) is a signal peptide. At 25–932 (ECKEALAKSK…VIVQPDQNFT (908 aa)) the chain is on the extracellular side. The Sema domain occupies 27–515 (KEALAKSKMN…TGKKITKIPL (489 aa)). The N-linked (GlcNAc...) asparagine glycan is linked to Asn45. Disulfide bonds link Cys95/Cys101, Cys98/Cys160, Cys133/Cys141, and Cys172/Cys175. An N-linked (GlcNAc...) asparagine glycan is attached at Asn106. Asn149 carries N-linked (GlcNAc...) asparagine glycosylation. Asn202 is a glycosylation site (N-linked (GlcNAc...) asparagine). 2 disulfide bridges follow: Cys298-Cys363 and Cys385-Cys397. N-linked (GlcNAc...) asparagine glycans are attached at residues Asn399 and Asn405. Disulfide bonds link Cys520–Cys538, Cys526–Cys561, Cys529–Cys545, and Cys541–Cys551. IPT/TIG domains follow at residues 563-655 (PAIY…FSYV), 657-739 (PVIT…FSYR), and 742-836 (PIVY…LIYV). Thr582 carries O-linked (Man) threonine glycosylation. Asn607 and Asn635 each carry an N-linked (GlcNAc...) asparagine glycan. O-linked (Man) threonine glycans are attached at residues Thr676 and Thr761. 3 N-linked (GlcNAc...) asparagine glycosylation sites follow: Asn785, Asn879, and Asn930. The chain crosses the membrane as a helical span at residues 933–955 (GLIAGVVSISVALLLLLGFFLWL). Over 956-1390 (KKRKQIKDLG…TRPASFWETS (435 aa)) the chain is Cytoplasmic. The residue at position 966 (Ser966) is a Phosphoserine. At Thr977 the chain carries Phosphothreonine. A phosphoserine mark is found at Ser990, Ser997, and Ser1000. Phosphotyrosine is present on Tyr1003. The Protein kinase domain maps to 1078–1345 (VHFNEVIGRG…RISAIFSTFI (268 aa)). Residues 1084–1092 (IGRGHFGCV) and Lys1110 contribute to the ATP site. The Proton acceptor role is filled by Asp1204. The tract at residues 1212–1381 (LDEKFTVKVA…EDNADNEVDT (170 aa)) is interaction with RANBP9. Tyr1230 carries the phosphotyrosine modification. Tyr1234 and Tyr1235 each carry phosphotyrosine; by autocatalysis. Position 1289 is a phosphothreonine (Thr1289). Positions 1320-1359 (WHPKAEMRPSFSELVSRISAIFSTFIGEHYVHVNATYVNV) are interaction with MUC20. A phosphotyrosine; by autocatalysis mark is found at Tyr1349 and Tyr1356. Residue Tyr1365 is modified to Phosphotyrosine.

This sequence belongs to the protein kinase superfamily. Tyr protein kinase family. Heterodimer made of an alpha chain (50 kDa) and a beta chain (145 kDa) which are disulfide linked. Binds PLXNB1. Interacts when phosphorylated with downstream effectors including STAT3, PIK3R1, SRC, PCLG1, GRB2 and GAB1. Interacts with SPSB1, SPSB2 and SPSB4. Interacts with INPP5D/SHIP1. When phosphorylated at Tyr-1356, interacts with INPPL1/SHIP2. Interacts with RANBP9 and RANBP10, as well as SPSB1, SPSB2, SPSB3 and SPSB4. SPSB1 binding occurs in the presence and in the absence of HGF, however HGF treatment has a positive effect on this interaction. Interacts with MUC20; prevents interaction with GRB2 and suppresses hepatocyte growth factor-induced cell proliferation. Interacts with GRB10. Interacts with PTPN1 and PTPN2. Interacts with HSP90AA1 and HSP90AB1; the interaction suppresses MET kinase activity. Interacts with tensin TNS3. Interacts (when phosphorylated) with tensin TNS4 (via SH2 domain); the interaction increases MET protein stability by inhibiting MET endocytosis and subsequent lysosomal degradation. Post-translationally, autophosphorylated in response to ligand binding on Tyr-1234 and Tyr-1235 in the kinase domain leading to further phosphorylation of Tyr-1349 and Tyr-1356 in the C-terminal multifunctional docking site. Dephosphorylated by PTPRJ at Tyr-1349 and Tyr-1365. Dephosphorylated by PTPN1 and PTPN2. In terms of processing, ubiquitinated. Ubiquitination by CBL regulates the receptor stability and activity through proteasomal degradation. O-mannosylation of IPT/TIG domains by TMEM260 is required for protein maturation. O-mannosylated residues are composed of single mannose glycans that are not elongated or modified.

Its subcellular location is the membrane. It carries out the reaction L-tyrosyl-[protein] + ATP = O-phospho-L-tyrosyl-[protein] + ADP + H(+). Its activity is regulated as follows. In its inactive state, the C-terminal tail interacts with the catalytic domain and inhibits the kinase activity. Upon ligand binding, the C-terminal tail is displaced and becomes phosphorylated, thus increasing the kinase activity. Functionally, receptor tyrosine kinase that transduces signals from the extracellular matrix into the cytoplasm by binding to hepatocyte growth factor/HGF ligand. Regulates many physiological processes including proliferation, scattering, morphogenesis and survival. Ligand binding at the cell surface induces autophosphorylation of MET on its intracellular domain that provides docking sites for downstream signaling molecules. Following activation by ligand, interacts with the PI3-kinase subunit PIK3R1, PLCG1, SRC, GRB2, STAT3 or the adapter GAB1. Recruitment of these downstream effectors by MET leads to the activation of several signaling cascades including the RAS-ERK, PI3 kinase-AKT, or PLCgamma-PKC. The RAS-ERK activation is associated with the morphogenetic effects while PI3K/AKT coordinates prosurvival effects. During embryonic development, MET signaling plays a role in gastrulation, development and migration of muscles and neuronal precursors, angiogenesis and kidney formation. In adults, participates in wound healing as well as organ regeneration and tissue remodeling. Also promotes differentiation and proliferation of hematopoietic cells. The polypeptide is Hepatocyte growth factor receptor (MET) (Nomascus leucogenys (Northern white-cheeked gibbon)).